Reading from the N-terminus, the 184-residue chain is Translocon-associated protein subunit beta (184 aa).

Residues 1–20 (MNFKTVISLFLVLFVSFVYC) form the signal peptide. At 21–147 (ENGAELLFHK…SQADYEKRTS (127 aa)) the chain is on the lumenal side. A glycan (N-linked (GlcNAc...) asparagine) is linked at N94. A helical transmembrane segment spans residues 148–168 (LLIKEWITFFVLCAGAIALPY). The Cytoplasmic segment spans residues 169 to 184 (SISTYYKKNYENGIKK).

Belongs to the TRAP-beta family. In terms of assembly, heterotrimer of TRAP-alpha, TRAP-beta and TRAP-gamma.

The protein localises to the endoplasmic reticulum membrane. TRAP proteins are part of a complex whose function is to bind calcium to the ER membrane and thereby regulate the retention of ER resident proteins. This Dictyostelium discoideum (Social amoeba) protein is Translocon-associated protein subunit beta (ssr2).